Here is a 115-residue protein sequence, read N- to C-terminus: Large ribosomal subunit protein uL22 (115 aa).

The protein belongs to the universal ribosomal protein uL22 family. In terms of assembly, part of the 50S ribosomal subunit.

In terms of biological role, this protein binds specifically to 23S rRNA; its binding is stimulated by other ribosomal proteins, e.g. L4, L17, and L20. It is important during the early stages of 50S assembly. It makes multiple contacts with different domains of the 23S rRNA in the assembled 50S subunit and ribosome. Functionally, the globular domain of the protein is located near the polypeptide exit tunnel on the outside of the subunit, while an extended beta-hairpin is found that lines the wall of the exit tunnel in the center of the 70S ribosome. The chain is Large ribosomal subunit protein uL22 from Streptomyces griseus subsp. griseus (strain JCM 4626 / CBS 651.72 / NBRC 13350 / KCC S-0626 / ISP 5235).